We begin with the raw amino-acid sequence, 772 residues long: MNRLRNAKIYVERAVKQKKIFTIQGCYPVIRCLLRRRGWVEKKMVHRSGPTLLPPQKDLDSSAMGDSDTTEDEDEDEDEEFQPSQLFDFDDLLKFDDLDGTHALMVGLCLNLRNLPWFDEVDANSFFPRCYCLGAEDDKKAFIEDFWLTAARNVLKLVVKSEWKSYPIQAVEEEASGDKQPKKQEKNPVLVSPEFVDEALCACEEYLSNLAHMDIDKDLEAPLYLTPEGWSLFLQRYYQVVHEGAELRHLDTQVQRCEDILQQLQAVVPQIDMEGDRNIWIVKPGAKSRGRGIMCMDHLEEMLKLVNGNPVVMKDGKWVVQKYIERPLLIFGTKFDLRQWFLVTDWNPLTVWFYRDSYIRFSTQPFSLKNLDNSVHLCNNSIQKHLENSCHRHPLLPPDNMWSSQRFQAHLQEMGAPNAWSTIIVPGMKDAVIHALQTSQDTVQCRKASFELYGADFVFGEDFQPWLIEINASPTMAPSTAVTARLCAGVQADTLRVVIDRMLDRNCDTGAFELIYKQPAVEVPQYVGIRLLVEGFTIKKPMAMCHRRMGVRPAVPLLTQRGSGEARHHFPSLHTKAQLPSPHVLRHQGQVLRRQHSKLVGTKALSTTGKALRTLPTAKVFISLPPNLDFKVAPSILKPRKAPALLCLRGPQLEVPCCLCPLKSEQFLAPVGRSRPKANSRPDCDKPRAEACPMKRLSPLKPLPLVGTFQRRRGLGDMKLGKPLLRFPTALVLDPTPNKKKQVKYLGLDSIAVGGSRVDGARPCTPGSTARA.

Residues Pro50–Phe81 form a disordered region. A compositionally biased stretch (acidic residues) spans Asp68–Phe81. The TTL domain occupies Ala151–Gly510. ATP contacts are provided by residues Lys283, Arg289–Gly290, Gln321–Ile324, Lys334–Asp336, and Cys378–Asn379. Arg289 is a binding site for a protein. Ser381 is a binding site for L-glutamate. Mg(2+) is bound by residues Asp456, Glu469, and Asn471. Glu469 contributes to the ATP binding site.

It depends on Mg(2+) as a cofactor. In terms of tissue distribution, expressed in brain, heart, kidney, testis, liver, lung, muscle, spleen, trachea and colon.

It is found in the cytoplasm. Its subcellular location is the cytoskeleton. The protein localises to the cell projection. The protein resides in the cilium. It localises to the cilium axoneme. It is found in the flagellum axoneme. The enzyme catalyses L-glutamyl-[protein] + glycine + ATP = glycyl-L-glutamyl-[protein] + ADP + phosphate + H(+). Functionally, monoglycylase which modifies alpha- and beta-tubulin, adding a single glycine on the gamma-carboxyl groups of specific glutamate residues to generate monoglycine side chains within the C-terminal tail of tubulin. Not involved in elongation step of the polyglycylation reaction. Preferentially glycylates a beta-tail peptide over the alpha-tail, although shifts its preference toward alpha-tail as beta-tail glutamylation increases. Competes with polyglutamylases for modification site on beta-tubulin substrate, thereby creating an anticorrelation between glycylation and glutamylation reactions. Together with TTLL8, mediates microtubule glycylation of primary and motile cilia, which is essential for their stability and maintenance. Involved in microtubule glycylation of primary cilia in colon which controls cell proliferation of epithelial cells and plays an essential role in colon cancer development. Together with TTLL8, glycylates sperm flagella which regulates axonemal dynein motor activity, thereby controlling flagellar beat, directional sperm swimming and male fertility. In Homo sapiens (Human), this protein is Tubulin monoglycylase TTLL3.